The primary structure comprises 294 residues: ATP synthase gamma chain (294 aa).

The protein belongs to the ATPase gamma chain family. As to quaternary structure, F-type ATPases have 2 components, CF(1) - the catalytic core - and CF(0) - the membrane proton channel. CF(1) has five subunits: alpha(3), beta(3), gamma(1), delta(1), epsilon(1). CF(0) has three main subunits: a, b and c.

The protein localises to the cell inner membrane. Functionally, produces ATP from ADP in the presence of a proton gradient across the membrane. The gamma chain is believed to be important in regulating ATPase activity and the flow of protons through the CF(0) complex. This Mesorhizobium japonicum (strain LMG 29417 / CECT 9101 / MAFF 303099) (Mesorhizobium loti (strain MAFF 303099)) protein is ATP synthase gamma chain.